The sequence spans 133 residues: Small ribosomal subunit protein uS8 (133 aa).

It belongs to the universal ribosomal protein uS8 family. As to quaternary structure, part of the 30S ribosomal subunit. Contacts proteins S5 and S12.

Its function is as follows. One of the primary rRNA binding proteins, it binds directly to 16S rRNA central domain where it helps coordinate assembly of the platform of the 30S subunit. The chain is Small ribosomal subunit protein uS8 from Chlamydia abortus (strain DSM 27085 / S26/3) (Chlamydophila abortus).